A 409-amino-acid polypeptide reads, in one-letter code: Peptidase T (409 aa).

A Zn(2+)-binding site is contributed by histidine 78. The active site involves aspartate 80. A Zn(2+)-binding site is contributed by aspartate 140. The active-site Proton acceptor is the glutamate 173. Zn(2+) is bound by residues glutamate 174, aspartate 196, and histidine 379.

It belongs to the peptidase M20B family. It depends on Zn(2+) as a cofactor.

Its subcellular location is the cytoplasm. It catalyses the reaction Release of the N-terminal residue from a tripeptide.. Its function is as follows. Cleaves the N-terminal amino acid of tripeptides. This chain is Peptidase T, found in Escherichia coli O139:H28 (strain E24377A / ETEC).